Here is a 469-residue protein sequence, read N- to C-terminus: MAIYITNTETGKKEELKTIEPGVVKMYVCGPTVYNYIHIGNARPAVVFDAFRRFLEYRGYKVIMVQNFTDIDDKIINEANEWGVDFKDVADTFIAEYWKDAQSLGIRAANFHPRTTDYVNEIVDAVEKLISKGYAYTVENGDVYFSVKKFERYGKLSGKKIEDLISGARVEVNTLKKDPLDFALWKAVKPGEPSWDSPWGCGRPGWHIECSVMSQKLLGDTFDIHAGGEDLIFPHHEDEKSQSEALTGKPFARYWMHNGMIITRGDKMSKSIGNVFLVREAVKRYGKDAVKLFLLSKHYRTPIEFSDEIMMENKKAALKVLKTLNRFEEKYPYPKVPKRDEYMNDIEQKFVEALEDDFNTPKAIALIFDLSKELNKAMDEGKDDEALKRYHLITRVFGSILGLFEGGVKISEGENTNKVIEEILKVRQEFRKAKNFEAADKIRDALLNSNVKILDTPDGTKWEILEVEE.

Position 29 (cysteine 29) interacts with Zn(2+). The short motif at proline 31–asparagine 41 is the 'HIGH' region element. The Zn(2+) site is built by cysteine 210, histidine 235, and glutamate 239. Positions lysine 267–serine 271 match the 'KMSKS' region motif. Lysine 270 is an ATP binding site.

Belongs to the class-I aminoacyl-tRNA synthetase family. As to quaternary structure, monomer. Zn(2+) is required as a cofactor.

The protein localises to the cytoplasm. It catalyses the reaction tRNA(Cys) + L-cysteine + ATP = L-cysteinyl-tRNA(Cys) + AMP + diphosphate. This Thermosipho africanus (strain TCF52B) protein is Cysteine--tRNA ligase.